The following is a 329-amino-acid chain: Transmembrane protein I329L (329 aa).

The signal sequence occupies residues 1–31 (MLRVFIFFVFLGSGLTGRIKPQVTCKYFISE). Asparagine 32, asparagine 39, asparagine 44, asparagine 76, asparagine 82, and asparagine 101 each carry an N-linked (GlcNAc...) asparagine; by host glycan. The Extracellular segment spans residues 32 to 239 (NNTWYKYNVT…NTERYKSCYP (208 aa)). The stretch at 112 to 133 (ELKFLDLRYNDLQVIDYNILRK) is one LRR repeat. N-linked (GlcNAc...) asparagine; by host glycans are attached at residues asparagine 185 and asparagine 219. Residues cysteine 195 and cysteine 237 are joined by a disulfide bond. A helical membrane pass occupies residues 240–260 (LVFISILCSCISFLFLFICLL). The Cytoplasmic segment spans residues 261 to 329 (RSICKKYSCT…EKKVSCSRRK (69 aa)).

Belongs to the asfivirus I329L family. In terms of processing, highly glycosylated.

Its subcellular location is the host endoplasmic reticulum membrane. The protein resides in the host Golgi apparatus membrane. Viral TLR3 homolog that probably prevents TLR3 dimerization and subsequent induction of IFN. Inhibits dsRNA-stimulated activation of NF-kB and IRF3. The chain is Transmembrane protein I329L from Ornithodoros (relapsing fever ticks).